The primary structure comprises 140 residues: Phosphoribosyl-AMP cyclohydrolase (140 aa).

Mg(2+) is bound at residue Asp-78. Cys-79 contacts Zn(2+). The Mg(2+) site is built by Asp-80 and Asp-82. Zn(2+)-binding residues include Cys-96 and Cys-103.

The protein belongs to the PRA-CH family. In terms of assembly, homodimer. The cofactor is Mg(2+). Requires Zn(2+) as cofactor.

The protein resides in the cytoplasm. The enzyme catalyses 1-(5-phospho-beta-D-ribosyl)-5'-AMP + H2O = 1-(5-phospho-beta-D-ribosyl)-5-[(5-phospho-beta-D-ribosylamino)methylideneamino]imidazole-4-carboxamide. It participates in amino-acid biosynthesis; L-histidine biosynthesis; L-histidine from 5-phospho-alpha-D-ribose 1-diphosphate: step 3/9. Its function is as follows. Catalyzes the hydrolysis of the adenine ring of phosphoribosyl-AMP. The sequence is that of Phosphoribosyl-AMP cyclohydrolase from Ralstonia pickettii (strain 12J).